The sequence spans 855 residues: Protein translocase subunit SecA (855 aa).

ATP is bound by residues Gln-85, 103-107, and Asp-492; that span reads GEGKT. The tract at residues 794-845 is disordered; sequence AAIHEESSSAAAPGPGQNQPGGPGGPSAGPVAPVRNLDKHGRNELCPCGSGK. Over residues 801–811 the composition is skewed to low complexity; it reads SSAAAPGPGQN. Residues Cys-839, Cys-841, Cys-850, and Cys-851 each contribute to the Zn(2+) site.

This sequence belongs to the SecA family. In terms of assembly, monomer and homodimer. Part of the essential Sec protein translocation apparatus which comprises SecA, SecYEG and auxiliary proteins SecDF. Other proteins may also be involved. Requires Zn(2+) as cofactor.

It is found in the cell membrane. Its subcellular location is the cytoplasm. The catalysed reaction is ATP + H2O + cellular proteinSide 1 = ADP + phosphate + cellular proteinSide 2.. Functionally, part of the Sec protein translocase complex. Interacts with the SecYEG preprotein conducting channel. Has a central role in coupling the hydrolysis of ATP to the transfer of proteins into and across the cell membrane, serving as an ATP-driven molecular motor driving the stepwise translocation of polypeptide chains across the membrane. This chain is Protein translocase subunit SecA, found in Clostridium beijerinckii (strain ATCC 51743 / NCIMB 8052) (Clostridium acetobutylicum).